Here is a 143-residue protein sequence, read N- to C-terminus: Large ribosomal subunit protein uL16 (143 aa).

This sequence belongs to the universal ribosomal protein uL16 family. Part of the 50S ribosomal subunit.

Its function is as follows. Binds 23S rRNA and is also seen to make contacts with the A and possibly P site tRNAs. In Fusobacterium nucleatum subsp. nucleatum (strain ATCC 25586 / DSM 15643 / BCRC 10681 / CIP 101130 / JCM 8532 / KCTC 2640 / LMG 13131 / VPI 4355), this protein is Large ribosomal subunit protein uL16.